Consider the following 195-residue polypeptide: Achaete-scute homolog 1b (195 aa).

In terms of domain architecture, bHLH spans 66–118; sequence MAVARRNERERNRVKQVNMGFQTLRQHVPNGAANKKMSKVETLRSAVEYIRAL. Residues 141 to 164 form a disordered region; it reads VSNAYSAGPESPHSAYSSDEGSYE.

In terms of assembly, efficient DNA binding requires dimerization with another bHLH protein. In terms of tissue distribution, in the 24 hours embryo, expressed in hindbrain close to the anterior and posterior boundaries of rhombomeres 2-6 and in ventral cells close to the floor plate of most rhombomeres. Also expressed in the telencephalon, diencephalon, tegmentum and spinal cord at sites distinct from those expressing ascl1a. Not expressed in the adenohypophysis.

The protein localises to the nucleus. Transcriptional regulator. May mediate transcription activation by binding to the E box-containing promoter. Involved in neurogenesis. Involved in maintaining rhombomere boundaries in the hindbrain, probably via up-regulation of delta expression. May mediate transcription activation by binding to the E box-containing promoter. This Danio rerio (Zebrafish) protein is Achaete-scute homolog 1b.